The primary structure comprises 138 residues: Isochorismatase-like protein asqB (138 aa).

The protein belongs to the isochorismatase family.

It catalyses the reaction [(1'E)-5'-(3',3'-dimethyloxiran-2'-yl)-3'-hydroxy-3'-methylpent-1'-en-1'-yl]-quinolinone B = yaequinolone C. The protein operates within secondary metabolite biosynthesis. Its pathway is alkaloid biosynthesis. It participates in mycotoxin biosynthesis. Its function is as follows. Isochorismatase-like protein; part of the gene cluster that mediates the biosynthesis of the aspoquinolone mycotoxins. Within the pathway, asqB converts [(1'E)-5'-(3',3'-dimethyloxiran-2'-yl)-3'-hydroxy-3'-methylpent-1'-en-1'-yl]-quinolinone B into yaequinolone C. The first step of the pathway is catalyzed by the nonribosomal peptide synthetase asqK that condenses anthranilic acid and O-methyl-L-tyrosine to produce 4'-methoxycyclopeptin. 4'-methoxycyclopeptin is then converted to 4'-methoxydehydrocyclopeptin by the ketoglutarate-dependent dioxygenase asqJ. AsqJ also converts its first product 4'-methoxydehydrocyclopeptin to 4'-methoxycyclopenin. The following conversion of 4'-methoxycyclopenin into 4'-methoxyviridicatin is catalyzed by the cyclopenase asqI. 4'-methoxyviridicatin is the precursor of quinolone natural products, and is further converted to quinolinone B. The prenyltransferase asqH1 then catalyzes the canonical Friedel-Crafts alkylation of quinolinone B with dimethylallyl cation to yield dimethylallyl quinolone, which is subjected to FAD-dependent dehydrogenation by the FAD-linked oxidoreductase asqF to yield conjugated aryl diene. The delta(3') double bond then serves as the site of the second alkylation with DMAPP catalyzed by the prenyltransferase asqH2 to yield a carbenium ion intermediate, which can be attacked by H(2)O to yield a styrenyl quinolone containing a C3'-hydroxyprenyl chain. The FAD-dependent monooxygenase asqG performs epoxidation of the terminal C7'-C8' olefin. Finally, after dehydratation of the epoxide at C3 by asqC, the quinolone epoxide rearrangement protein asqO catalyzes an enzymatic 3-exo-tet cyclization to yield the cyclopropyl-THF ring system in aspoquinolone. The sequence is that of Isochorismatase-like protein asqB from Emericella nidulans (strain FGSC A4 / ATCC 38163 / CBS 112.46 / NRRL 194 / M139) (Aspergillus nidulans).